A 244-amino-acid polypeptide reads, in one-letter code: UDP-2,3-diacylglucosamine hydrolase (244 aa).

Mn(2+)-binding residues include Asp8, His10, Asp41, Asn79, and His114. 79–80 (NR) contributes to the substrate binding site. Residues Asp122, Ser160, Asn164, Lys167, and His195 each contribute to the substrate site. Positions 195 and 197 each coordinate Mn(2+).

It belongs to the LpxH family. Mn(2+) is required as a cofactor.

It is found in the cell inner membrane. It carries out the reaction UDP-2-N,3-O-bis[(3R)-3-hydroxytetradecanoyl]-alpha-D-glucosamine + H2O = 2-N,3-O-bis[(3R)-3-hydroxytetradecanoyl]-alpha-D-glucosaminyl 1-phosphate + UMP + 2 H(+). Its pathway is glycolipid biosynthesis; lipid IV(A) biosynthesis; lipid IV(A) from (3R)-3-hydroxytetradecanoyl-[acyl-carrier-protein] and UDP-N-acetyl-alpha-D-glucosamine: step 4/6. Its function is as follows. Hydrolyzes the pyrophosphate bond of UDP-2,3-diacylglucosamine to yield 2,3-diacylglucosamine 1-phosphate (lipid X) and UMP by catalyzing the attack of water at the alpha-P atom. Involved in the biosynthesis of lipid A, a phosphorylated glycolipid that anchors the lipopolysaccharide to the outer membrane of the cell. In Marinobacter nauticus (strain ATCC 700491 / DSM 11845 / VT8) (Marinobacter aquaeolei), this protein is UDP-2,3-diacylglucosamine hydrolase.